The chain runs to 27 residues: VYGMLFKFLAKKVAKKLISHVAKKQLQ.

At Gln-27 the chain carries Glutamine amide.

Expressed by the venom gland.

The protein localises to the secreted. This Cupiennius salei (American wandering spider) protein is Cupiennin-4b.